The primary structure comprises 215 residues: MRVILLGAPGAGKGTQAKFITEKFGIPQISTGDMLRAAVKAGTELGLKAKSVMDAGNLVSDDLIIGLIKDRLAEPDCANGVLFDGFPRTIPQAEALLKAGLEIDHVLEIAVDDEEIVKRMSGRRVHEGSGRIYHTIFNPPKVEGVDDVTGESLVQRKDDVEETVRLRLKVYHDQTKPLVEFYSKLEAQNGKPKCSHIPGVGSVEEITAKVLVALS.

Position 10 to 15 (10 to 15 (GAGKGT)) interacts with ATP. An NMP region spans residues 30-59 (STGDMLRAAVKAGTELGLKAKSVMDAGNLV). Residues threonine 31, arginine 36, 57-59 (NLV), 85-88 (GFPR), and glutamine 92 contribute to the AMP site. Residues 122-159 (GRRVHEGSGRIYHTIFNPPKVEGVDDVTGESLVQRKDD) are LID. ATP is bound by residues arginine 123 and 132 to 133 (IY). Positions 156 and 167 each coordinate AMP. Glycine 201 serves as a coordination point for ATP.

This sequence belongs to the adenylate kinase family. Monomer.

The protein resides in the cytoplasm. It catalyses the reaction AMP + ATP = 2 ADP. Its pathway is purine metabolism; AMP biosynthesis via salvage pathway; AMP from ADP: step 1/1. Its function is as follows. Catalyzes the reversible transfer of the terminal phosphate group between ATP and AMP. Plays an important role in cellular energy homeostasis and in adenine nucleotide metabolism. The protein is Adenylate kinase of Pseudomonas syringae pv. tomato (strain ATCC BAA-871 / DC3000).